A 150-amino-acid polypeptide reads, in one-letter code: D-aminoacyl-tRNA deacylase (150 aa).

Positions 140–141 match the Gly-cisPro motif, important for rejection of L-amino acids motif; it reads GP.

The protein belongs to the DTD family. Homodimer.

It localises to the cytoplasm. It carries out the reaction glycyl-tRNA(Ala) + H2O = tRNA(Ala) + glycine + H(+). The enzyme catalyses a D-aminoacyl-tRNA + H2O = a tRNA + a D-alpha-amino acid + H(+). An aminoacyl-tRNA editing enzyme that deacylates mischarged D-aminoacyl-tRNAs. Also deacylates mischarged glycyl-tRNA(Ala), protecting cells against glycine mischarging by AlaRS. Acts via tRNA-based rather than protein-based catalysis; rejects L-amino acids rather than detecting D-amino acids in the active site. By recycling D-aminoacyl-tRNA to D-amino acids and free tRNA molecules, this enzyme counteracts the toxicity associated with the formation of D-aminoacyl-tRNA entities in vivo and helps enforce protein L-homochirality. In Eremothecium gossypii (strain ATCC 10895 / CBS 109.51 / FGSC 9923 / NRRL Y-1056) (Yeast), this protein is D-aminoacyl-tRNA deacylase (DTD1).